The primary structure comprises 369 residues: Glutamate 5-kinase (369 aa).

Residue lysine 14 participates in ATP binding. Positions 54, 141, and 153 each coordinate substrate. ATP-binding positions include 173 to 174 (SD) and 215 to 221 (TGGMVTK). The 79-residue stretch at 277-355 (RGRLHLDPGA…SELATALGPA (79 aa)) folds into the PUA domain.

This sequence belongs to the glutamate 5-kinase family.

The protein localises to the cytoplasm. The catalysed reaction is L-glutamate + ATP = L-glutamyl 5-phosphate + ADP. Its pathway is amino-acid biosynthesis; L-proline biosynthesis; L-glutamate 5-semialdehyde from L-glutamate: step 1/2. In terms of biological role, catalyzes the transfer of a phosphate group to glutamate to form L-glutamate 5-phosphate. In Salinispora arenicola (strain CNS-205), this protein is Glutamate 5-kinase.